Here is a 363-residue protein sequence, read N- to C-terminus: Peptide chain release factor 1 (363 aa).

At Gln237 the chain carries N5-methylglutamine. The segment covering 284 to 297 has biased composition (basic and acidic residues); that stretch reads ERAKQQSERSEQRR. The segment at 284-306 is disordered; sequence ERAKQQSERSEQRRLAVGSGDRS.

The protein belongs to the prokaryotic/mitochondrial release factor family. In terms of processing, methylated by PrmC. Methylation increases the termination efficiency of RF1.

The protein localises to the cytoplasm. Peptide chain release factor 1 directs the termination of translation in response to the peptide chain termination codons UAG and UAA. This Halorhodospira halophila (strain DSM 244 / SL1) (Ectothiorhodospira halophila (strain DSM 244 / SL1)) protein is Peptide chain release factor 1.